The primary structure comprises 419 residues: Gamma-glutamyl phosphate reductase (419 aa).

This sequence belongs to the gamma-glutamyl phosphate reductase family.

The protein resides in the cytoplasm. The catalysed reaction is L-glutamate 5-semialdehyde + phosphate + NADP(+) = L-glutamyl 5-phosphate + NADPH + H(+). It participates in amino-acid biosynthesis; L-proline biosynthesis; L-glutamate 5-semialdehyde from L-glutamate: step 2/2. Its function is as follows. Catalyzes the NADPH-dependent reduction of L-glutamate 5-phosphate into L-glutamate 5-semialdehyde and phosphate. The product spontaneously undergoes cyclization to form 1-pyrroline-5-carboxylate. In Maridesulfovibrio salexigens (strain ATCC 14822 / DSM 2638 / NCIMB 8403 / VKM B-1763) (Desulfovibrio salexigens), this protein is Gamma-glutamyl phosphate reductase.